Consider the following 77-residue polypeptide: Sec-independent protein translocase protein TatA (77 aa).

The chain crosses the membrane as a helical span at residues 1–21 (MGSLSIWHWIVVIAVVLLLFG). Positions 43-60 (MQDDDKAPEKTEPVKSID) are enriched in basic and acidic residues. Residues 43 to 77 (MQDDDKAPEKTEPVKSIDHGATPSATRTDVGSKAV) form a disordered region.

The protein belongs to the TatA/E family. The Tat system comprises two distinct complexes: a TatABC complex, containing multiple copies of TatA, TatB and TatC subunits, and a separate TatA complex, containing only TatA subunits. Substrates initially bind to the TatABC complex, which probably triggers association of the separate TatA complex to form the active translocon.

It is found in the cell inner membrane. Its function is as follows. Part of the twin-arginine translocation (Tat) system that transports large folded proteins containing a characteristic twin-arginine motif in their signal peptide across membranes. TatA could form the protein-conducting channel of the Tat system. The polypeptide is Sec-independent protein translocase protein TatA (Bradyrhizobium sp. (strain BTAi1 / ATCC BAA-1182)).